Consider the following 208-residue polypeptide: TnpB-like protein MJ0012 (208 aa).

Residues Cys83, Cys86, Cys100, and Cys103 each coordinate Zn(2+).

It belongs to the transposase 35 family.

The polypeptide is TnpB-like protein MJ0012 (Methanocaldococcus jannaschii (strain ATCC 43067 / DSM 2661 / JAL-1 / JCM 10045 / NBRC 100440) (Methanococcus jannaschii)).